Reading from the N-terminus, the 315-residue chain is MTEKIVVIVGPTEVGKTKLGIALAKKLGGEIISGDSMQIYKGMDIGTAKVKPDEMEGVPHHLLDIKEPCEPFSVVEFQRLARALITDISARGRLPIIVGGTGLYIQAAIYDYRFSDAPSDEAYRRALRQLAAEQGAEALHEQLKAVDPESAARIHPNNVRRVIRALEVYHCTGKPFSEWQRGQQRQLLYETALIGLTAERSVLYRRINERVDEMIAEGLIEEVRSLYDRGLRDCQAVQAIGYKELYDYFDGRVSLDEAIEQLKQNSRRYAKRQLTWFRNQMPVEWFDMTDPEKFAVKVEEIFRYIAGKLRLEANI.

10 to 17 lines the ATP pocket; that stretch reads GPTEVGKT. 12–17 provides a ligand contact to substrate; sequence TEVGKT. The interaction with substrate tRNA stretch occupies residues 35-38; it reads DSMQ.

This sequence belongs to the IPP transferase family. Monomer. It depends on Mg(2+) as a cofactor.

The enzyme catalyses adenosine(37) in tRNA + dimethylallyl diphosphate = N(6)-dimethylallyladenosine(37) in tRNA + diphosphate. Its function is as follows. Catalyzes the transfer of a dimethylallyl group onto the adenine at position 37 in tRNAs that read codons beginning with uridine, leading to the formation of N6-(dimethylallyl)adenosine (i(6)A). In Geobacillus thermodenitrificans (strain NG80-2), this protein is tRNA dimethylallyltransferase.